The sequence spans 397 residues: CCA-adding enzyme (397 aa).

2 residues coordinate ATP: Gly26 and Arg29. Residues Gly26 and Arg29 each coordinate CTP. Positions 39 and 41 each coordinate Mg(2+). Positions 110, 153, 156, 159, and 162 each coordinate ATP. Residues Arg110, Asp153, Arg156, Arg159, and Arg162 each coordinate CTP.

Belongs to the tRNA nucleotidyltransferase/poly(A) polymerase family. Bacterial CCA-adding enzyme type 3 subfamily. As to quaternary structure, homodimer. It depends on Mg(2+) as a cofactor.

It catalyses the reaction a tRNA precursor + 2 CTP + ATP = a tRNA with a 3' CCA end + 3 diphosphate. The catalysed reaction is a tRNA with a 3' CCA end + 2 CTP + ATP = a tRNA with a 3' CCACCA end + 3 diphosphate. Its function is as follows. Catalyzes the addition and repair of the essential 3'-terminal CCA sequence in tRNAs without using a nucleic acid template. Adds these three nucleotides in the order of C, C, and A to the tRNA nucleotide-73, using CTP and ATP as substrates and producing inorganic pyrophosphate. tRNA 3'-terminal CCA addition is required both for tRNA processing and repair. Also involved in tRNA surveillance by mediating tandem CCA addition to generate a CCACCA at the 3' terminus of unstable tRNAs. While stable tRNAs receive only 3'-terminal CCA, unstable tRNAs are marked with CCACCA and rapidly degraded. This Bacillus cereus (strain B4264) protein is CCA-adding enzyme.